The chain runs to 439 residues: Probable non-inhibitory serpin-Z9 (439 aa).

The disordered stretch occupies residues 12-44 (RRPPFPAGDANHRRLSSAPAPKPEAPAEAMPPP). Positions 31–44 (APKPEAPAEAMPPP) are enriched in pro residues. Positions 389–413 (GIEETSVSMGLGKPLPAQHFKADHP) are RCL.

It belongs to the serpin family.

The protein is Probable non-inhibitory serpin-Z9 of Oryza sativa subsp. japonica (Rice).